Reading from the N-terminus, the 456-residue chain is tRNA-2-methylthio-N(6)-dimethylallyladenosine synthase (456 aa).

In terms of domain architecture, MTTase N-terminal spans lysine 18 to alanine 134. 6 residues coordinate [4Fe-4S] cluster: cysteine 27, cysteine 63, cysteine 98, cysteine 172, cysteine 176, and cysteine 179. The region spanning cysteine 158–glutamate 390 is the Radical SAM core domain. The TRAM domain occupies alanine 393–phenylalanine 456.

The protein belongs to the methylthiotransferase family. MiaB subfamily. As to quaternary structure, monomer. It depends on [4Fe-4S] cluster as a cofactor.

The protein localises to the cytoplasm. The enzyme catalyses N(6)-dimethylallyladenosine(37) in tRNA + (sulfur carrier)-SH + AH2 + 2 S-adenosyl-L-methionine = 2-methylsulfanyl-N(6)-dimethylallyladenosine(37) in tRNA + (sulfur carrier)-H + 5'-deoxyadenosine + L-methionine + A + S-adenosyl-L-homocysteine + 2 H(+). In terms of biological role, catalyzes the methylthiolation of N6-(dimethylallyl)adenosine (i(6)A), leading to the formation of 2-methylthio-N6-(dimethylallyl)adenosine (ms(2)i(6)A) at position 37 in tRNAs that read codons beginning with uridine. The protein is tRNA-2-methylthio-N(6)-dimethylallyladenosine synthase of Phocaeicola vulgatus (strain ATCC 8482 / DSM 1447 / JCM 5826 / CCUG 4940 / NBRC 14291 / NCTC 11154) (Bacteroides vulgatus).